A 250-amino-acid chain; its full sequence is Proteasome subunit alpha type-4 (250 aa).

Belongs to the peptidase T1A family. In terms of assembly, the 26S proteasome consists of a 20S proteasome core and two 19S regulatory subunits. The 20S proteasome core is composed of 28 subunits that are arranged in four stacked rings, resulting in a barrel-shaped structure. The two end rings are each formed by seven alpha subunits, and the two central rings are each formed by seven beta subunits. The catalytic chamber with the active sites is on the inside of the barrel.

It localises to the cytoplasm. The protein resides in the nucleus. The proteasome is a multicatalytic proteinase complex which is characterized by its ability to cleave peptides with Arg, Phe, Tyr, Leu, and Glu adjacent to the leaving group at neutral or slightly basic pH. The proteasome has an ATP-dependent proteolytic activity. The sequence is that of Proteasome subunit alpha type-4 (psmA4) from Dictyostelium discoideum (Social amoeba).